Consider the following 276-residue polypeptide: Sulfur carrier protein FdhD (276 aa).

Cys-120 acts as the Cysteine persulfide intermediate in catalysis.

This sequence belongs to the FdhD family.

Its subcellular location is the cytoplasm. In terms of biological role, required for formate dehydrogenase (FDH) activity. Acts as a sulfur carrier protein that transfers sulfur from IscS to the molybdenum cofactor prior to its insertion into FDH. In Bordetella bronchiseptica (strain ATCC BAA-588 / NCTC 13252 / RB50) (Alcaligenes bronchisepticus), this protein is Sulfur carrier protein FdhD.